The chain runs to 384 residues: Putative dioxygenase SSO1533 (384 aa).

Fe cation-binding residues include histidine 296, glutamate 302, and histidine 332.

Belongs to the homogentisate dioxygenase family. The cofactor is Fe cation.

The chain is Putative dioxygenase SSO1533 from Saccharolobus solfataricus (strain ATCC 35092 / DSM 1617 / JCM 11322 / P2) (Sulfolobus solfataricus).